Consider the following 1245-residue polypeptide: ABC transporter B family member 13 (1245 aa).

Positions 1 to 14 are enriched in polar residues; sequence MDNTERSSNGNIQA. Residues 1 to 20 are disordered; that stretch reads MDNTERSSNGNIQAETEAKE. Residues 47 to 336 enclose the ABC transmembrane type-1 1 domain; that stretch reads MLLGGLGACI…AAPSLSAIAK (290 aa). Residues 48–68 form a helical membrane-spanning segment; that stretch reads LLGGLGACIHGATLPLFFVFF. Asparagine 77 carries an N-linked (GlcNAc...) asparagine glycan. A run of 5 helical transmembrane segments spans residues 94–114, 171–191, 195–215, 276–296, and 314–334; these read LYLV…VSCW, HVLR…LSVW, LLTL…AIVM, LGVG…LWYA, and ILNV…LSAI. Asparagine 351 and asparagine 391 each carry an N-linked (GlcNAc...) asparagine glycan. The ABC transporter 1 domain occupies 372–607; the sequence is IEFQKVSFAY…GGDYATLVNC (236 aa). 406–413 contacts ATP; that stretch reads GPSGSGKS. Residues 610–629 are compositionally biased toward polar residues; sequence TEPQENSRSIMSETCKSQAG. The tract at residues 610–660 is disordered; it reads TEPQENSRSIMSETCKSQAGSSSSRRVSSSRRTSSFRVDQEKTKNDDSKKD. The segment covering 630-646 has biased composition (low complexity); sequence SSSSRRVSSSRRTSSFR. The segment covering 647–660 has biased composition (basic and acidic residues); that stretch reads VDQEKTKNDDSKKD. The ABC transmembrane type-1 2 domain occupies 681 to 969; sequence ALLGSIGAVL…TLALTPDIVK (289 aa). The next 2 helical transmembrane spans lie at 686-706 and 725-745; these read IGAV…AYVL and AIIF…QHYF. An N-linked (GlcNAc...) asparagine glycan is attached at asparagine 778. 4 helical membrane passes run 805–822, 828–848, 913–933, and 947–967; these read IVQN…AFFY, AVVT…QLFL, LSQF…SVLI, and FMVL…TPDI. The region spanning 1004-1240 is the ABC transporter 2 domain; it reads IEFRNVSFVY…PNGFYKQLTS (237 aa). The N-linked (GlcNAc...) asparagine glycan is linked to asparagine 1008. 1039–1046 serves as a coordination point for ATP; the sequence is GPSGSGKS. A glycan (N-linked (GlcNAc...) asparagine) is linked at asparagine 1106.

The protein belongs to the ABC transporter superfamily. ABCB family. Multidrug resistance exporter (TC 3.A.1.201) subfamily.

It is found in the membrane. This chain is ABC transporter B family member 13 (ABCB13), found in Arabidopsis thaliana (Mouse-ear cress).